The primary structure comprises 254 residues: Tubulin-specific chaperone B (254 aa).

Residues 182 to 225 enclose the CAP-Gly domain; it reads PLPLDVMGTWCGVEFPEAAGKNDGRINGVTLFGPVAPGHGSFVR. Positions 234–254 are disordered; the sequence is KDEESAEVEDVHDDVESDDEI. Acidic residues predominate over residues 237 to 254; it reads ESAEVEDVHDDVESDDEI.

It belongs to the TBCB family. As to quaternary structure, binds to monomeric alpha-tubulin.

The protein localises to the cytoplasm. It is found in the cytoskeleton. In terms of biological role, acts to sequester alpha-tubulin from interaction with beta-tubulin, raising the possibility that it plays a regulatory role in the formation of the tubulin heterodimer. This chain is Tubulin-specific chaperone B (ALF1), found in Saccharomyces cerevisiae (strain ATCC 204508 / S288c) (Baker's yeast).